The following is a 315-amino-acid chain: DNA-directed RNA polymerase subunit alpha (315 aa).

Residues 1 to 228 (MAQFQIECVE…DLFNPLKDIS (228 aa)) are alpha N-terminal domain (alpha-NTD). Positions 238–315 (IPDDPTAQIP…LPQERSSKHS (78 aa)) are alpha C-terminal domain (alpha-CTD).

The protein belongs to the RNA polymerase alpha chain family. In cyanobacteria the RNAP catalytic core is composed of 2 alpha, 1 beta, 1 beta', 1 gamma and 1 omega subunit. When a sigma factor is associated with the core the holoenzyme is formed, which can initiate transcription.

It catalyses the reaction RNA(n) + a ribonucleoside 5'-triphosphate = RNA(n+1) + diphosphate. In terms of biological role, DNA-dependent RNA polymerase catalyzes the transcription of DNA into RNA using the four ribonucleoside triphosphates as substrates. The sequence is that of DNA-directed RNA polymerase subunit alpha from Trichormus variabilis (strain ATCC 29413 / PCC 7937) (Anabaena variabilis).